Reading from the N-terminus, the 360-residue chain is Probable nuclear hormone receptor HR38 (360 aa).

The disordered stretch occupies residues 1 to 21 (GSSSPGVAPADNTGPRAAPSS). Positions 23-98 (SQLCAVCGDT…VGMVKEVVRT (76 aa)) form a DNA-binding region, nuclear receptor. 2 NR C4-type zinc fingers span residues 26 to 46 (CAVCGDTAACQHYGVRTCEGC) and 62 to 86 (CLAEKSCPVDKRRRNRCQFCWFQKC). The region spanning 122–357 (PPISLITALV…PLIENMFRAS (236 aa)) is the NR LBD domain.

This sequence belongs to the nuclear hormone receptor family. NR4 subfamily. In terms of assembly, forms a heterodimer with USP.

The protein resides in the nucleus. In Bombyx mori (Silk moth), this protein is Probable nuclear hormone receptor HR38 (HR38).